The following is a 99-amino-acid chain: uncharacterized protein (99 aa).

This is an uncharacterized protein from Lepidoptera (butterflies and moths).